The sequence spans 330 residues: Inactive hydroxysteroid dehydrogenase-like protein 1 (330 aa).

Ala2 bears the N-acetylalanine mark. The tract at residues 2-82 (AAVDSFYLLY…SGATDGIGRA (81 aa)) is required for mitochondria translocation. Residues 74 to 80 (GATDGIG), Asp125, and Lys222 each bind NADP(+).

This sequence belongs to the short-chain dehydrogenases/reductases (SDR) family. 17-beta-HSD 3 subfamily. Interacts with STYXL1.

Its subcellular location is the mitochondrion. This chain is Inactive hydroxysteroid dehydrogenase-like protein 1 (HSDL1), found in Pongo abelii (Sumatran orangutan).